The primary structure comprises 373 residues: Queuine tRNA-ribosyltransferase (373 aa).

Residue aspartate 93 is the Proton acceptor of the active site. Residues 93-97 (DSGGF), aspartate 147, glutamine 191, and glycine 218 each bind substrate. An RNA binding region spans residues 249–255 (GVGAPRD). Catalysis depends on aspartate 268, which acts as the Nucleophile. Residues 273-277 (TRNAR) are RNA binding; important for wobble base 34 recognition. Positions 306, 308, 311, and 337 each coordinate Zn(2+).

Belongs to the queuine tRNA-ribosyltransferase family. In terms of assembly, homodimer. Within each dimer, one monomer is responsible for RNA recognition and catalysis, while the other monomer binds to the replacement base PreQ1. Zn(2+) serves as cofactor.

The catalysed reaction is 7-aminomethyl-7-carbaguanine + guanosine(34) in tRNA = 7-aminomethyl-7-carbaguanosine(34) in tRNA + guanine. The protein operates within tRNA modification; tRNA-queuosine biosynthesis. Its function is as follows. Catalyzes the base-exchange of a guanine (G) residue with the queuine precursor 7-aminomethyl-7-deazaguanine (PreQ1) at position 34 (anticodon wobble position) in tRNAs with GU(N) anticodons (tRNA-Asp, -Asn, -His and -Tyr). Catalysis occurs through a double-displacement mechanism. The nucleophile active site attacks the C1' of nucleotide 34 to detach the guanine base from the RNA, forming a covalent enzyme-RNA intermediate. The proton acceptor active site deprotonates the incoming PreQ1, allowing a nucleophilic attack on the C1' of the ribose to form the product. After dissociation, two additional enzymatic reactions on the tRNA convert PreQ1 to queuine (Q), resulting in the hypermodified nucleoside queuosine (7-(((4,5-cis-dihydroxy-2-cyclopenten-1-yl)amino)methyl)-7-deazaguanosine). The protein is Queuine tRNA-ribosyltransferase of Solidesulfovibrio magneticus (strain ATCC 700980 / DSM 13731 / RS-1) (Desulfovibrio magneticus).